The following is a 237-amino-acid chain: tRNA1(Val) (adenine(37)-N6)-methyltransferase (237 aa).

This sequence belongs to the methyltransferase superfamily. tRNA (adenine-N(6)-)-methyltransferase family.

The protein resides in the cytoplasm. It catalyses the reaction adenosine(37) in tRNA1(Val) + S-adenosyl-L-methionine = N(6)-methyladenosine(37) in tRNA1(Val) + S-adenosyl-L-homocysteine + H(+). Its function is as follows. Specifically methylates the adenine in position 37 of tRNA(1)(Val) (anticodon cmo5UAC). This Bacteroides fragilis (strain ATCC 25285 / DSM 2151 / CCUG 4856 / JCM 11019 / LMG 10263 / NCTC 9343 / Onslow / VPI 2553 / EN-2) protein is tRNA1(Val) (adenine(37)-N6)-methyltransferase.